A 464-amino-acid chain; its full sequence is MGSKTPGNHRRGPNESSPHPAIDAINPPKQAAASRLVHSSLEGESEGGEDEDDDKPGADLKAVGQIGNNGQKRNKRRKKKKKNTKELEILQTTPPRVALANIFRSQRYPEAEIVKYSTDNDNLQRTTAEELRHISVLNAMDDEFLNDYRKAAEVHRQVRQYVQTIIKPGIALSQLAEEIEDGVRALTNHQGLETGDALKAGMAFPTGLCLNNIAAHWTPNPGAKEVILKYDDVLKIDFGVHVNGRIVDSAFTIAFNPVYDNLLAAVKDATNAGLKEAGIDARIAHISETIQNVMESYEVELNQKVIPVKAVRNITGHNVLHYKIHGDKQVPFVKTQTNQRMEEGDVFAIETFGSTGKAYLDDATGIYGYGYDENASTAGLHHSSAKSLLKTIKENFGTLVFSRRYLERLGVQRYHLGMRSLVTNGIVQSYAPLVDVPGSYVAQFEHTVLLRPNCKEVISRGDDY.

The interval Met-1–Glu-86 is disordered. The span at Gly-43–Asp-54 shows a compositional bias: acidic residues. The segment covering Lys-72 to Asn-83 has biased composition (basic residues). A substrate-binding site is contributed by His-216. A divalent metal cation contacts are provided by Asp-237, Asp-248, and His-317. Substrate is bound at residue His-325. A divalent metal cation contacts are provided by Glu-350 and Glu-445.

This sequence belongs to the peptidase M24A family. Methionine aminopeptidase eukaryotic type 2 subfamily. Co(2+) is required as a cofactor. It depends on Zn(2+) as a cofactor. The cofactor is Mn(2+). Requires Fe(2+) as cofactor.

Its subcellular location is the cytoplasm. It catalyses the reaction Release of N-terminal amino acids, preferentially methionine, from peptides and arylamides.. In terms of biological role, cotranslationally removes the N-terminal methionine from nascent proteins. The N-terminal methionine is often cleaved when the second residue in the primary sequence is small and uncharged (Met-Ala-, Cys, Gly, Pro, Ser, Thr, or Val). This is Methionine aminopeptidase 2 from Ajellomyces capsulatus (strain NAm1 / WU24) (Darling's disease fungus).